A 98-amino-acid polypeptide reads, in one-letter code: Small ribosomal subunit protein uS19 (98 aa).

Residues 77-98 (TRTYRGHAGGKSEKGGSAPRKK) are disordered.

This sequence belongs to the universal ribosomal protein uS19 family.

Functionally, protein S19 forms a complex with S13 that binds strongly to the 16S ribosomal RNA. The protein is Small ribosomal subunit protein uS19 of Chlorobium phaeobacteroides (strain BS1).